Here is a 435-residue protein sequence, read N- to C-terminus: MAVTVETLDKLERRITLTLSADELKNEVESRLKKLARTTKADGFRPGKVPMSVVAQRYGYSVQYEVMNDKVGQAFAAATGEAQLRVAGTPRITEKDGSADGQVSFDATFEVYPEVTIGDLSALEVERVTTEVTDVAIDRTLDILRKQRRTFADRPQGEYAVDGDRVTIDFEGKIDGETFQGGKAEAFQFILGEGRMLEAFEKAVRGMKTGESKTFPLAFPADYHGADVAGKEADFLVTLTRIEAQNLPEVDAAFAESLGIADATVDGLRADIKKNLEREVKFRVAARNKQSVMSALEKVATFDLPKALVDNEMARLVENARADLKQRGIADADKAPIPTEMFQPQAERRVRLGLTMAELVRANALSATMEQIKAHIDEMAQSYEKPEEVVRWYFGDQQRLSEVEAVVIEANVANFVLGQAQVVDKQLPFDELMGA.

The region spanning Gly-163–Pro-248 is the PPIase FKBP-type domain.

This sequence belongs to the FKBP-type PPIase family. Tig subfamily.

It localises to the cytoplasm. The catalysed reaction is [protein]-peptidylproline (omega=180) = [protein]-peptidylproline (omega=0). Its function is as follows. Involved in protein export. Acts as a chaperone by maintaining the newly synthesized protein in an open conformation. Functions as a peptidyl-prolyl cis-trans isomerase. The chain is Trigger factor from Leptothrix cholodnii (strain ATCC 51168 / LMG 8142 / SP-6) (Leptothrix discophora (strain SP-6)).